Here is a 453-residue protein sequence, read N- to C-terminus: 3-phosphoshikimate 1-carboxyvinyltransferase (453 aa).

Positions 1-27 (MSHDSEPQPVTATPGGPLNGSLKPPGD) are disordered. Lys28, Ser29, and Arg33 together coordinate 3-phosphoshikimate. Lys28 provides a ligand contact to phosphoenolpyruvate. The phosphoenolpyruvate site is built by Gly101 and Arg129. 4 residues coordinate 3-phosphoshikimate: Ser175, Gln177, Asp330, and Lys357. Gln177 is a binding site for phosphoenolpyruvate. Asp330 functions as the Proton acceptor in the catalytic mechanism. Phosphoenolpyruvate-binding residues include Arg361 and Arg405.

This sequence belongs to the EPSP synthase family. As to quaternary structure, monomer.

It localises to the cytoplasm. The catalysed reaction is 3-phosphoshikimate + phosphoenolpyruvate = 5-O-(1-carboxyvinyl)-3-phosphoshikimate + phosphate. It functions in the pathway metabolic intermediate biosynthesis; chorismate biosynthesis; chorismate from D-erythrose 4-phosphate and phosphoenolpyruvate: step 6/7. Catalyzes the transfer of the enolpyruvyl moiety of phosphoenolpyruvate (PEP) to the 5-hydroxyl of shikimate-3-phosphate (S3P) to produce enolpyruvyl shikimate-3-phosphate and inorganic phosphate. In Methylorubrum extorquens (strain CM4 / NCIMB 13688) (Methylobacterium extorquens), this protein is 3-phosphoshikimate 1-carboxyvinyltransferase.